The primary structure comprises 201 residues: Large ribosomal subunit protein uL4 (201 aa).

Residues 45–66 (AQLTRSEVSGGGKKPWRQKGTG) are disordered.

It belongs to the universal ribosomal protein uL4 family. As to quaternary structure, part of the 50S ribosomal subunit.

Its function is as follows. One of the primary rRNA binding proteins, this protein initially binds near the 5'-end of the 23S rRNA. It is important during the early stages of 50S assembly. It makes multiple contacts with different domains of the 23S rRNA in the assembled 50S subunit and ribosome. Functionally, forms part of the polypeptide exit tunnel. This is Large ribosomal subunit protein uL4 from Aeromonas salmonicida (strain A449).